Consider the following 244-residue polypeptide: Small ribosomal subunit protein uS2 (244 aa).

It belongs to the universal ribosomal protein uS2 family.

The sequence is that of Small ribosomal subunit protein uS2 from Exiguobacterium sibiricum (strain DSM 17290 / CCUG 55495 / CIP 109462 / JCM 13490 / 255-15).